The chain runs to 454 residues: uncharacterized protein (454 aa).

4 residues coordinate [4Fe-4S] cluster: C73, C79, C82, and C154. Residues Q279, F307, D328, and D381 each coordinate S-adenosyl-L-methionine. The Nucleophile role is filled by C408.

This sequence belongs to the class I-like SAM-binding methyltransferase superfamily. RNA M5U methyltransferase family.

This is an uncharacterized protein from Leptospira interrogans serogroup Icterohaemorrhagiae serovar copenhageni (strain Fiocruz L1-130).